The following is a 396-amino-acid chain: Jacalin-related lectin 45 (396 aa).

Jacalin-type lectin domains are found at residues 3–138, 144–264, and 270–392; these read KKVT…KTSH, QFRM…NFAV, and VKKL…YVKP.

The protein belongs to the jacalin lectin family.

The protein is Jacalin-related lectin 45 (JAL45) of Arabidopsis thaliana (Mouse-ear cress).